The primary structure comprises 311 residues: tRNA dimethylallyltransferase (311 aa).

16-23 contacts ATP; it reads GPTASGKS. 18 to 23 lines the substrate pocket; it reads TASGKS. An interaction with substrate tRNA region spans residues 41–44; sequence DSMQ.

It belongs to the IPP transferase family. In terms of assembly, monomer. Requires Mg(2+) as cofactor.

The enzyme catalyses adenosine(37) in tRNA + dimethylallyl diphosphate = N(6)-dimethylallyladenosine(37) in tRNA + diphosphate. Catalyzes the transfer of a dimethylallyl group onto the adenine at position 37 in tRNAs that read codons beginning with uridine, leading to the formation of N6-(dimethylallyl)adenosine (i(6)A). The sequence is that of tRNA dimethylallyltransferase from Geobacter sulfurreducens (strain ATCC 51573 / DSM 12127 / PCA).